We begin with the raw amino-acid sequence, 98 residues long: NADH-ubiquinone oxidoreductase chain 4L (98 aa).

3 helical membrane-spanning segments follow: residues 1 to 21 (MSPI…GMLV), 26 to 46 (LMAS…MIAL), and 61 to 81 (IILL…LVSI).

Belongs to the complex I subunit 4L family. As to quaternary structure, core subunit of respiratory chain NADH dehydrogenase (Complex I) which is composed of 45 different subunits.

It localises to the mitochondrion inner membrane. The catalysed reaction is a ubiquinone + NADH + 5 H(+)(in) = a ubiquinol + NAD(+) + 4 H(+)(out). Functionally, core subunit of the mitochondrial membrane respiratory chain NADH dehydrogenase (Complex I) which catalyzes electron transfer from NADH through the respiratory chain, using ubiquinone as an electron acceptor. Part of the enzyme membrane arm which is embedded in the lipid bilayer and involved in proton translocation. This is NADH-ubiquinone oxidoreductase chain 4L (MT-ND4L) from Chlorocebus sabaeus (Green monkey).